The chain runs to 531 residues: Ultra-long-chain fatty acid omega-hydroxylase (531 aa).

Over 1 to 22 (MLPITDRLLHLLGLEKTAFRIY) the chain is Lumenal. A helical transmembrane segment spans residues 23 to 43 (AVSTLLLFLLFFLFRLLLRFL). Topologically, residues 44–531 (RLCRSFYITC…LKVEPLPPRA (488 aa)) are cytoplasmic. Residues Glu335 and Cys475 each contribute to the heme site.

It belongs to the cytochrome P450 family. Requires heme as cofactor.

Its subcellular location is the endoplasmic reticulum membrane. The protein resides in the microsome membrane. It carries out the reaction triacontanoate + reduced [NADPH--hemoprotein reductase] + O2 = omega-hydroxy-triacontanoate + oxidized [NADPH--hemoprotein reductase] + H2O + H(+). It catalyses the reaction an omega-methyl-ultra-long-chain fatty acid + reduced [NADPH--hemoprotein reductase] + O2 = an omega-hydroxy-ultra-long-chain fatty acid + oxidized [NADPH--hemoprotein reductase] + H2O + H(+). A cytochrome P450 monooxygenase involved in epidermal ceramide biosynthesis. Hydroxylates the terminal carbon (omega-hydroxylation) of ultra-long-chain fatty acyls (C28-C36) prior to ceramide synthesis. Contributes to the synthesis of three classes of omega-hydroxy-ultra-long chain fatty acylceramides having sphingosine, 6-hydroxysphingosine and phytosphingosine bases, all major lipid components that underlie the permeability barrier of the stratum corneum. Mechanistically, uses molecular oxygen inserting one oxygen atom into a substrate, and reducing the second into a water molecule, with two electrons provided by NADPH via cytochrome P450 reductase (CPR; NADPH-ferrihemoprotein reductase). In Homo sapiens (Human), this protein is Ultra-long-chain fatty acid omega-hydroxylase.